The chain runs to 183 residues: Ly6/PLAUR domain-containing protein 6B (183 aa).

The first 39 residues, 1–39, serve as a signal peptide directing secretion; that stretch reads MLYKSSDRPAHKVSMLLLCHALAIAVVQIVIFSESWAFA. Positions 60 to 151 constitute a UPAR/Ly6 domain; sequence FKCFTCENAG…VELPTNHTNA (92 aa). A sufficient for inhibiting alpha-7 nAChR currents region spans residues 60–154; sequence FKCFTCENAG…PTNHTNAVFA (95 aa). 6 cysteine pairs are disulfide-bonded: Cys-62-Cys-90, Cys-65-Cys-74, Cys-83-Cys-109, Cys-115-Cys-134, Cys-120-Cys-131, and Cys-135-Cys-140. Ser-164 carries the GPI-anchor amidated serine lipid modification. Residues 165–183 constitute a propeptide, removed in mature form; the sequence is SAPTLYLPVLAWVFVLPLL.

It is found in the cell membrane. In terms of biological role, likely acts as a modulator of nicotinic acetylcholine receptors (nAChRs) activity. In vitro acts on nAChRs in a subtype- and stoichiometry-dependent manner. Modulates specifically alpha-3(3):beta-4(2) nAChRs by enhancing the sensitivity to ACh, decreasing ACh-induced maximal current response and increasing the rate of desensitization to ACh; has no effect on alpha-7 homomeric nAChRs; modulates alpha-3(2):alpha-5:beta-4(2) nAChRs in the context of CHRNA5/alpha-5 variant Asn-398 but not its wild-type sequence. However, according to another report in vitro it can weakly inhibits alpha-7 nAChRs. The chain is Ly6/PLAUR domain-containing protein 6B (LYPD6B) from Homo sapiens (Human).